A 311-amino-acid chain; its full sequence is 4-hydroxy-tetrahydrodipicolinate synthase (311 aa).

T51 lines the pyruvate pocket. The active-site Proton donor/acceptor is the Y140. Catalysis depends on K168, which acts as the Schiff-base intermediate with substrate. I209 provides a ligand contact to pyruvate.

The protein belongs to the DapA family. Homotetramer; dimer of dimers.

It is found in the cytoplasm. It carries out the reaction L-aspartate 4-semialdehyde + pyruvate = (2S,4S)-4-hydroxy-2,3,4,5-tetrahydrodipicolinate + H2O + H(+). It functions in the pathway amino-acid biosynthesis; L-lysine biosynthesis via DAP pathway; (S)-tetrahydrodipicolinate from L-aspartate: step 3/4. Functionally, catalyzes the condensation of (S)-aspartate-beta-semialdehyde [(S)-ASA] and pyruvate to 4-hydroxy-tetrahydrodipicolinate (HTPA). The chain is 4-hydroxy-tetrahydrodipicolinate synthase from Streptococcus pneumoniae (strain Taiwan19F-14).